Here is a 159-residue protein sequence, read N- to C-terminus: Ribosomal RNA large subunit methyltransferase H (159 aa).

S-adenosyl-L-methionine-binding positions include L76, G108, and 127-132 (FGLLTF).

The protein belongs to the RNA methyltransferase RlmH family. In terms of assembly, homodimer.

The protein resides in the cytoplasm. The enzyme catalyses pseudouridine(1915) in 23S rRNA + S-adenosyl-L-methionine = N(3)-methylpseudouridine(1915) in 23S rRNA + S-adenosyl-L-homocysteine + H(+). In terms of biological role, specifically methylates the pseudouridine at position 1915 (m3Psi1915) in 23S rRNA. This chain is Ribosomal RNA large subunit methyltransferase H, found in Streptococcus thermophilus (strain ATCC BAA-491 / LMD-9).